A 295-amino-acid polypeptide reads, in one-letter code: Protoheme IX farnesyltransferase (295 aa).

The next 7 helical transmembrane spans lie at 43-63 (PIQLALLVLGTSAAAGGVAAL), 92-112 (SAFVLGVLMCIGSLFLLYALV), 114-134 (PLAALFTLLTIFSYLGWYTPA), 140-160 (WSTEIGAVAGAFPPLIGWSAG), 166-186 (ALGWVLFGVLFFWQVPHFMAV), 231-251 (LLWGLTTWFYGVAAAVTGLWF), and 272-292 (FFASIGYLPLVLGALVIDRLF).

Belongs to the UbiA prenyltransferase family. Protoheme IX farnesyltransferase subfamily.

The protein resides in the cell inner membrane. It carries out the reaction heme b + (2E,6E)-farnesyl diphosphate + H2O = Fe(II)-heme o + diphosphate. It participates in porphyrin-containing compound metabolism; heme O biosynthesis; heme O from protoheme: step 1/1. Its function is as follows. Converts heme B (protoheme IX) to heme O by substitution of the vinyl group on carbon 2 of heme B porphyrin ring with a hydroxyethyl farnesyl side group. This is Protoheme IX farnesyltransferase from Opitutus terrae (strain DSM 11246 / JCM 15787 / PB90-1).